A 338-amino-acid chain; its full sequence is Solute carrier family 35 member G3 (338 aa).

The interval 1–24 (MAGSHPYFNQPDSTHPSPPSAPPS) is disordered. 9 helical membrane passes run 37–57 (TSGL…VGPL), 67–87 (LPSL…ALLL), 105–125 (FFCA…VQVV), 160–180 (CGLL…LWTL), 190–210 (ALGY…LLVY), 221–241 (TVAF…LFVL), 250–270 (LLSW…FTCV), 281–301 (LVCA…YYML), and 305–325 (VAPS…IITA). The EamA 1 domain occupies 49–174 (LPAGFVGPLS…CILGLIIIVG (126 aa)). One can recognise an EamA 2 domain in the interval 272 to 325 (YAVTKAHPALVCAVLHSEVVVALILQYYMLHETVAPSDIMGAGVALGSIAIITA).

Belongs to the SLC35G solute transporter family.

Its subcellular location is the membrane. This is Solute carrier family 35 member G3 (SLC35G3) from Pan paniscus (Pygmy chimpanzee).